A 469-amino-acid polypeptide reads, in one-letter code: Cysteine--tRNA ligase (469 aa).

Position 29 (C29) interacts with Zn(2+). A 'HIGH' region motif is present at residues 31 to 41 (PTVYNYIHIGN). Zn(2+)-binding residues include C210, H235, and E239. The 'KMSKS' region signature appears at 267–271 (KMSKS). K270 is an ATP binding site.

This sequence belongs to the class-I aminoacyl-tRNA synthetase family. In terms of assembly, monomer. It depends on Zn(2+) as a cofactor.

It is found in the cytoplasm. The catalysed reaction is tRNA(Cys) + L-cysteine + ATP = L-cysteinyl-tRNA(Cys) + AMP + diphosphate. This is Cysteine--tRNA ligase from Thermosipho africanus (strain TCF52B).